An 89-amino-acid polypeptide reads, in one-letter code: Small ribosomal subunit protein uS15 (89 aa).

It belongs to the universal ribosomal protein uS15 family. In terms of assembly, part of the 30S ribosomal subunit. Forms a bridge to the 50S subunit in the 70S ribosome, contacting the 23S rRNA.

One of the primary rRNA binding proteins, it binds directly to 16S rRNA where it helps nucleate assembly of the platform of the 30S subunit by binding and bridging several RNA helices of the 16S rRNA. Functionally, forms an intersubunit bridge (bridge B4) with the 23S rRNA of the 50S subunit in the ribosome. This chain is Small ribosomal subunit protein uS15, found in Bifidobacterium adolescentis (strain ATCC 15703 / DSM 20083 / NCTC 11814 / E194a).